Consider the following 843-residue polypeptide: Glycogen phosphorylase, brain form (843 aa).

Alanine 2 carries the N-acetylalanine modification. Residue serine 15 is modified to Phosphoserine; by PHK; in form phosphorylase A. Residues aspartate 43, tyrosine 197, and arginine 310 each coordinate AMP. Tyrosine 197 is modified (phosphotyrosine). Tyrosine 473 is modified (phosphotyrosine). Residue lysine 569 participates in pyridoxal 5'-phosphate binding. Residues 677-678 (TG) are pyridoxal 5'-phosphate. Lysine 681 is modified (N6-(pyridoxal phosphate)lysine).

This sequence belongs to the glycogen phosphorylase family. As to quaternary structure, homodimer. Dimers associate into a tetramer to form the enzymatically active phosphorylase A. The cofactor is pyridoxal 5'-phosphate. In terms of processing, phosphorylation of Ser-15 converts phosphorylase B (unphosphorylated) to phosphorylase A.

It catalyses the reaction [(1-&gt;4)-alpha-D-glucosyl](n) + phosphate = [(1-&gt;4)-alpha-D-glucosyl](n-1) + alpha-D-glucose 1-phosphate. Its activity is regulated as follows. Activity of phosphorylase is controlled both by allosteric means (through the non-covalent binding of metabolites) and by covalent modification. Thus AMP allosterically activates, whereas ATP, ADP, and glucose-6-phosphate allosterically inhibit, phosphorylase B. Functionally, glycogen phosphorylase that regulates glycogen mobilization. Phosphorylase is an important allosteric enzyme in carbohydrate metabolism. Enzymes from different sources differ in their regulatory mechanisms and in their natural substrates. However, all known phosphorylases share catalytic and structural properties. This is Glycogen phosphorylase, brain form (PYGB) from Bos taurus (Bovine).